The primary structure comprises 390 residues: GDSL esterase/lipase At1g28640 (390 aa).

The first 26 residues, 1–26 (MASSLEKLISSFLLVLYSTTIIVASS), serve as a signal peptide directing secretion. S42 acts as the Nucleophile in catalysis. N-linked (GlcNAc...) asparagine glycosylation is found at N105, N138, and N321. Active-site residues include D346 and H349. N-linked (GlcNAc...) asparagine glycosylation occurs at N364.

Belongs to the 'GDSL' lipolytic enzyme family.

It is found in the secreted. The protein is GDSL esterase/lipase At1g28640 of Arabidopsis thaliana (Mouse-ear cress).